Reading from the N-terminus, the 46-residue chain is Escargot/snail protein homolog (46 aa).

C2H2-type zinc fingers lie at residues 1 to 4 (IRTH), 8 to 30 (CKCP…TTHH), and 36 to 46 (FSCQHCNRAFA).

Belongs to the snail C2H2-type zinc-finger protein family.

It is found in the nucleus. The protein is Escargot/snail protein homolog of Oryzias latipes (Japanese rice fish).